A 209-amino-acid chain; its full sequence is Na(+)-translocating NADH-quinone reductase subunit D (209 aa).

The next 5 helical transmembrane spans lie at 42-62 (VVMT…ISLI), 66-86 (IPNS…VIVV), 95-115 (FEIS…CIVM), 131-151 (FMDG…VGFL), and 178-198 (NGLF…IWAL).

The protein belongs to the NqrDE/RnfAE family. As to quaternary structure, composed of six subunits; NqrA, NqrB, NqrC, NqrD, NqrE and NqrF.

Its subcellular location is the cell inner membrane. It catalyses the reaction a ubiquinone + n Na(+)(in) + NADH + H(+) = a ubiquinol + n Na(+)(out) + NAD(+). In terms of biological role, NQR complex catalyzes the reduction of ubiquinone-1 to ubiquinol by two successive reactions, coupled with the transport of Na(+) ions from the cytoplasm to the periplasm. NqrA to NqrE are probably involved in the second step, the conversion of ubisemiquinone to ubiquinol. This Serratia proteamaculans (strain 568) protein is Na(+)-translocating NADH-quinone reductase subunit D.